The chain runs to 451 residues: POC1 centriolar protein homolog B (451 aa).

WD repeat units lie at residues 16–55, 58–99, 101–139, 142–181, 183–223, 226–265, and 268–307; these read GHKAAITSLDLSPNGKQLATASWDTFLMLWNFKPHARAYR, GHKD…SEFK, HTAPVRSVDFSADGQFLATASEDKSIKVWSMYRQRFLYS, RHTHWVRCAKFSPDGRLIVSCSEDKTIKIWDTTNKQCVNN, SDSV…LLQH, VHSGGVNCISFHPSDNYLVTASSDGTLKILDLLEGRLIYT, and GHTGPVFTVSFSKGGELFASGGADTQVLLWRTNFDELHCK. Ser-321 is modified (phosphoserine). The disordered stretch occupies residues 372–394; it reads PECSPTTTKKKTEDMSDLPSESQ. A coiled-coil region spans residues 404-443; sequence ALEHIMEQLNVLTQTVSILEQRLTLTEDKLKDCLENQQKL.

Belongs to the WD repeat POC1 family. In terms of assembly, interacts with POC1A. Interacts with FAM161A. Interacts with CEP44; the interaction is direct and recruits POC1B to centriolar microtubules. Forms a microtubule-associated complex with POC5, CETN2 and FAM161A. Interacts with CCDC15. In terms of processing, phosphorylated in mitotic cells that may be mediated by CDK1.

Its subcellular location is the cytoplasm. The protein resides in the cytoskeleton. It localises to the microtubule organizing center. It is found in the centrosome. The protein localises to the centriole. Its subcellular location is the cilium basal body. The protein resides in the spindle pole. In terms of biological role, plays an important role in centriole assembly and/or stability and ciliogenesis. Involved in early steps of centriole duplication, as well as in the later steps of centriole length control. Acts in concert with POC1A to ensure centriole integrity and proper mitotic spindle formation. Required for primary cilia formation, ciliary length and also cell proliferation. Required for retinal integrity. Acts as a positive regulator of centriole elongation. The protein is POC1 centriolar protein homolog B (POC1B) of Pongo abelii (Sumatran orangutan).